A 1080-amino-acid chain; its full sequence is Ubiquitin carboxyl-terminal hydrolase 8 (1080 aa).

The MIT domain maps to 33-116 (TKNYIHSAQK…ESLKLRYEEA (84 aa)). Positions 119 to 173 (RKQLEEKDRREEEQLQQQKRQEMGREDSGAAAKRSVENLLDSKTKTQRINGEKSE) are enriched in basic and acidic residues. Residues 119-176 (RKQLEEKDRREEEQLQQQKRQEMGREDSGAAAKRSVENLLDSKTKTQRINGEKSEGAA) form a disordered region. S160 is modified (phosphoserine). Residues 195-313 (KNTSLIIMDA…WLLCYPQFTT (119 aa)) form the Rhodanese domain. A compositionally biased stretch (low complexity) spans 379–393 (ALAGPGAAPRAEASP). 3 disordered regions span residues 379–455 (ALAG…TDEE), 468–605 (EKNK…RSEE), and 642–710 (PPEM…KPPC). S392 bears the Phosphoserine mark. The SH3-binding signature appears at 405 to 413 (PQVDRTKKP). Residues 417-427 (LPEDHRIKSEN) show a composition bias toward basic and acidic residues. S446 carries the post-translational modification Phosphoserine. Composition is skewed to basic and acidic residues over residues 468–535 (EKNK…RELS), 549–577 (SKSEHEASDAKVPVEGKRCPTSEAQKRPA), and 593–605 (AQREPLTRARSEE). T569 is subject to Phosphothreonine. Residues 678–688 (SYSSPDITQAL) are compositionally biased toward polar residues. S680 and S681 each carry phosphoserine. The USP domain maps to 739-1071 (TGLRNLGNTC…AAYILFYTSL (333 aa)). C748 acts as the Nucleophile in catalysis. T907 is subject to Phosphothreonine. H1029 acts as the Proton acceptor in catalysis.

The protein belongs to the peptidase C19 family. As to quaternary structure, forms a ternary complex with RNF128 and OTUB1. Interacts (via C-terminal UCH catalytic domain) with OTUB1 isoform 1. Interacts with STAM2 (via SH3 domain). Interacts with DNAJB3, EGFR, EPS15, RASGRF1, RNF41, YWHAE, YWHAG and YWHAZ. Interacts with NBR1, RASGRF1, RNF41 and IST1. Associates with the ESCRT-0 complex and with microtubules. Interacts with BIRC6/bruce and KIF23/MKLP1. Phosphorylation of Ser-680 is essential for interaction with YWHAE and for cytosol localization. Undergoes dephosphorylation at Ser-680 in the M phase. Tyrosine-phosphorylated in its N-terminal half in an EGFR-dependent manner. In terms of processing, ubiquitinated. Inactive form is mostly monoubiquitinated, but polyubiquitination happens too. Ubiquitination is increased in EGF-stimulated cells. Ubiquitination of active form is undetectable, suggesting a possibility that USP8 deubiquitinates itself, thereby regulating its own function. In terms of tissue distribution, highly expressed in testis. Expressed at intermediate level in brain.

The protein localises to the cytoplasm. It localises to the nucleus. It is found in the endosome membrane. Its subcellular location is the cell membrane. The catalysed reaction is Thiol-dependent hydrolysis of ester, thioester, amide, peptide and isopeptide bonds formed by the C-terminal Gly of ubiquitin (a 76-residue protein attached to proteins as an intracellular targeting signal).. Hydrolase that can remove conjugated ubiquitin from proteins and therefore plays an important regulatory role at the level of protein turnover by preventing degradation. Converts both 'Lys-48' an 'Lys-63'-linked ubiquitin chains. Catalytic activity is enhanced in the M phase. Involved in cell proliferation. Required to enter into S phase in response to serum stimulation. May regulate T-cell anergy mediated by RNF128 via the formation of a complex containing RNF128 and OTUB1. Probably regulates the stability of STAM2 and RASGRF1. Regulates endosomal ubiquitin dynamics, cargo sorting, membrane traffic at early endosomes, and maintenance of ESCRT-0 stability. The level of protein ubiquitination on endosomes is essential for maintaining the morphology of the organelle. Deubiquitinates EPS15 and controls tyrosine kinase stability. Removes conjugated ubiquitin from EGFR thus regulating EGFR degradation and downstream MAPK signaling. Involved in acrosome biogenesis through interaction with the spermatid ESCRT-0 complex and microtubules. Deubiquitinates BIRC6/bruce and KIF23/MKLP1. Deubiquitinates BACE1 which inhibits BACE1 lysosomal degradation and modulates BACE-mediated APP cleavage and amyloid-beta formation. This Mus musculus (Mouse) protein is Ubiquitin carboxyl-terminal hydrolase 8.